We begin with the raw amino-acid sequence, 484 residues long: ATP synthase subunit beta (484 aa).

168 to 175 (GGAGVGKT) is a binding site for ATP.

The protein belongs to the ATPase alpha/beta chains family. In terms of assembly, F-type ATPases have 2 components, CF(1) - the catalytic core - and CF(0) - the membrane proton channel. CF(1) has five subunits: alpha(3), beta(3), gamma(1), delta(1), epsilon(1). CF(0) has three main subunits: a(1), b(2) and c(9-12). The alpha and beta chains form an alternating ring which encloses part of the gamma chain. CF(1) is attached to CF(0) by a central stalk formed by the gamma and epsilon chains, while a peripheral stalk is formed by the delta and b chains.

It localises to the cell membrane. It carries out the reaction ATP + H2O + 4 H(+)(in) = ADP + phosphate + 5 H(+)(out). Produces ATP from ADP in the presence of a proton gradient across the membrane. The catalytic sites are hosted primarily by the beta subunits. The sequence is that of ATP synthase subunit beta from Renibacterium salmoninarum (strain ATCC 33209 / DSM 20767 / JCM 11484 / NBRC 15589 / NCIMB 2235).